Reading from the N-terminus, the 448-residue chain is MLIQRGGLKVVAGLGISGVSAVNFLHEQGYQVAVTDSRPTPPGHDQIPAGVKTSFGQLDQELLLQAEEIILSPGLAPQLPEIQAAIAKGISVVGDIQLLRRATDVPIVAITGSNAKSTVTTLIGLMAKDAGKKVAVGGNLGRPALDLLKDQPELLVLELSSFQLETTSHLNAEVAVVLNMSEDHLDRHGNMLGYHQAKHRIFQGAKKVVFNRDDALSRPLVPDTTPMQSFGLNAPDLNQYGVLRDADGTLWLARGLQRLIKSSDLYIQGMHNVANALACLALGEAIGLPMESMLETLKQFKGLEHRCEYVKTVHDVRYYNDSKGTNVGATLAAIDGLGAAIEVKKGKVALILGGQGKGQDFGPLRSSIEKYAKVVVLIGEDAPVIEQAIQGATKILHAATLKEAVELCQRETQAEDVVLLSPACASFDMFKSYNDRGQQFVACVNSLV.

112-118 lines the ATP pocket; sequence GSNAKST.

It belongs to the MurCDEF family.

The protein localises to the cytoplasm. The enzyme catalyses UDP-N-acetyl-alpha-D-muramoyl-L-alanine + D-glutamate + ATP = UDP-N-acetyl-alpha-D-muramoyl-L-alanyl-D-glutamate + ADP + phosphate + H(+). It participates in cell wall biogenesis; peptidoglycan biosynthesis. Its function is as follows. Cell wall formation. Catalyzes the addition of glutamate to the nucleotide precursor UDP-N-acetylmuramoyl-L-alanine (UMA). The sequence is that of UDP-N-acetylmuramoylalanine--D-glutamate ligase from Acinetobacter baumannii (strain AB307-0294).